Here is a 518-residue protein sequence, read N- to C-terminus: Bifunctional methyltransferase (518 aa).

The interval 1–300 (MQYSIKQILN…SHNRVIEISP (300 aa)) is hemK. Positions 1 to 302 (MQYSIKQILN…NRVIEISPIN (302 aa)) are RF MTase. Residues 140–144 (GTGSG), Asp-163, Trp-192, Asn-207, Glu-347, Glu-372, Asn-399, and Asp-421 each bind S-adenosyl-L-methionine. Substrate is bound at residue 207–210 (NPPY). A tRNA (guanine-N(7)-)-methyltransferase region spans residues 301–518 (INLNRSYARR…MILQHALTGH (218 aa)). Residues 305-518 (RSYARRIGKS…MILQHALTGH (214 aa)) form a tRNA MTase region. Asp-421 is a catalytic residue. 2 residues coordinate substrate: Lys-425 and Asp-457.

In the C-terminal section; belongs to the class I-like SAM-binding methyltransferase superfamily. TrmB family. The protein in the N-terminal section; belongs to the protein N5-glutamine methyltransferase family. PrmC subfamily.

The catalysed reaction is L-glutaminyl-[peptide chain release factor] + S-adenosyl-L-methionine = N(5)-methyl-L-glutaminyl-[peptide chain release factor] + S-adenosyl-L-homocysteine + H(+). The enzyme catalyses guanosine(46) in tRNA + S-adenosyl-L-methionine = N(7)-methylguanosine(46) in tRNA + S-adenosyl-L-homocysteine. Methylates the class 1 translation termination release factors RF1/PrfA and RF2/PrfB on the glutamine residue of the universally conserved GGQ motif. Functionally, catalyzes the formation of N(7)-methylguanine at position 46 (m7G46) in tRNA. The chain is Bifunctional methyltransferase (prmC/trmB) from Rickettsia typhi (strain ATCC VR-144 / Wilmington).